Reading from the N-terminus, the 511-residue chain is Exodeoxyribonuclease 7 large subunit (511 aa).

The protein belongs to the XseA family. Heterooligomer composed of large and small subunits.

The protein resides in the cytoplasm. It carries out the reaction Exonucleolytic cleavage in either 5'- to 3'- or 3'- to 5'-direction to yield nucleoside 5'-phosphates.. In terms of biological role, bidirectionally degrades single-stranded DNA into large acid-insoluble oligonucleotides, which are then degraded further into small acid-soluble oligonucleotides. This chain is Exodeoxyribonuclease 7 large subunit, found in Brucella melitensis biotype 2 (strain ATCC 23457).